The sequence spans 176 residues: Small ribosomal subunit protein uS4 (176 aa).

The region spanning 103–165 (RRLQTIVYKK…PTSPYAKRRL (63 aa)) is the S4 RNA-binding domain.

It belongs to the universal ribosomal protein uS4 family. As to quaternary structure, part of the 30S ribosomal subunit. Contacts protein S5. The interaction surface between S4 and S5 is involved in control of translational fidelity.

Functionally, one of the primary rRNA binding proteins, it binds directly to 16S rRNA where it nucleates assembly of the body of the 30S subunit. Its function is as follows. With S5 and S12 plays an important role in translational accuracy. The chain is Small ribosomal subunit protein uS4 from Hyperthermus butylicus (strain DSM 5456 / JCM 9403 / PLM1-5).